The chain runs to 126 residues: Histone H2B type 1-J (126 aa).

Positions 1–12 are enriched in low complexity; that stretch reads MPEPAKSAPAPK. A disordered region spans residues 1–35; it reads MPEPAKSAPAPKKGSKKAVTKAQKKDGKKRKRSRK. Residue Pro-2 is modified to N-acetylproline. The residue at position 3 (Glu-3) is an ADP-ribosyl glutamic acid. N6-(2-hydroxyisobutyryl)lysine; alternate is present on Lys-6. Lys-6 carries the post-translational modification N6-(beta-hydroxybutyryl)lysine; alternate. Lys-6 carries the N6-acetyllysine; alternate modification. N6-butyryllysine; alternate is present on Lys-6. N6-crotonyllysine; alternate is present on Lys-6. N6-lactoyllysine; alternate is present on Lys-6. Lys-6 participates in a covalent cross-link: Glycyl lysine isopeptide (Lys-Gly) (interchain with G-Cter in SUMO2); alternate. Residue Ser-7 is modified to ADP-ribosylserine. An N6-(beta-hydroxybutyryl)lysine; alternate modification is found at Lys-12. 2 positions are modified to N6-acetyllysine; alternate: Lys-12 and Lys-13. An N6-crotonyllysine; alternate mark is found at Lys-12 and Lys-13. Position 12 is an N6-lactoyllysine; alternate (Lys-12). At Lys-13 the chain carries N6-(2-hydroxyisobutyryl)lysine; alternate. Position 15 is a phosphoserine; by STK4/MST1 (Ser-15). Lys-16, Lys-17, Lys-21, and Lys-24 each carry N6-acetyllysine; alternate. An N6-crotonyllysine; alternate mark is found at Lys-16, Lys-17, Lys-21, and Lys-24. 4 positions are modified to N6-lactoyllysine; alternate: Lys-16, Lys-17, Lys-21, and Lys-24. N6-(beta-hydroxybutyryl)lysine; alternate is present on residues Lys-17 and Lys-21. Position 17 is an N6-glutaryllysine; alternate (Lys-17). N6-(2-hydroxyisobutyryl)lysine; alternate is present on residues Lys-21 and Lys-24. Residue Lys-21 is modified to N6-butyryllysine; alternate. Lys-21 participates in a covalent cross-link: Glycyl lysine isopeptide (Lys-Gly) (interchain with G-Cter in SUMO2); alternate. Position 25 is an N6-(2-hydroxyisobutyryl)lysine (Lys-25). The residue at position 35 (Lys-35) is an N6-(2-hydroxyisobutyryl)lysine; alternate. The residue at position 35 (Lys-35) is an N6-(beta-hydroxybutyryl)lysine; alternate. Lys-35 carries the post-translational modification N6-crotonyllysine; alternate. An N6-glutaryllysine; alternate modification is found at Lys-35. The residue at position 35 (Lys-35) is an N6-succinyllysine; alternate. Lys-35 is covalently cross-linked (Glycyl lysine isopeptide (Lys-Gly) (interchain with G-Cter in ubiquitin); alternate). Glu-36 carries the post-translational modification PolyADP-ribosyl glutamic acid. Ser-37 carries the post-translational modification Phosphoserine; by AMPK. N6-(2-hydroxyisobutyryl)lysine; alternate occurs at positions 44, 47, and 58. The residue at position 44 (Lys-44) is an N6-lactoyllysine; alternate. Residues Lys-44 and Lys-47 each carry the N6-glutaryllysine; alternate modification. An N6-methyllysine; alternate modification is found at Lys-47. Residue Lys-58 is modified to N6,N6-dimethyllysine; alternate. The residue at position 80 (Arg-80) is a Dimethylated arginine. Lys-86 carries the N6-(2-hydroxyisobutyryl)lysine; alternate modification. The residue at position 86 (Lys-86) is an N6-(beta-hydroxybutyryl)lysine; alternate. Lys-86 carries the post-translational modification N6-acetyllysine; alternate. Residue Lys-86 is modified to N6-lactoyllysine; alternate. The residue at position 86 (Lys-86) is an N6,N6,N6-trimethyllysine; alternate. Residues Arg-87 and Arg-93 each carry the omega-N-methylarginine modification. Lys-109 carries the N6-(2-hydroxyisobutyryl)lysine; alternate modification. An N6-lactoyllysine; alternate modification is found at Lys-109. Lys-109 bears the N6-glutaryllysine; alternate mark. An N6-methyllysine; alternate modification is found at Lys-109. Ser-113 is a glycosylation site (O-linked (GlcNAc) serine). Thr-116 bears the Phosphothreonine mark. Lys-117 and Lys-121 each carry N6-(2-hydroxyisobutyryl)lysine; alternate. N6-(beta-hydroxybutyryl)lysine; alternate is present on residues Lys-117 and Lys-121. 2 positions are modified to N6-lactoyllysine; alternate: Lys-117 and Lys-121. Lys-117 and Lys-121 each carry N6-glutaryllysine; alternate. 2 positions are modified to N6-succinyllysine; alternate: Lys-117 and Lys-121. Lys-117 bears the N6-malonyllysine; alternate mark. Lys-117 carries the N6-methylated lysine; alternate modification. Residue Lys-121 forms a Glycyl lysine isopeptide (Lys-Gly) (interchain with G-Cter in ubiquitin); alternate linkage.

It belongs to the histone H2B family. The nucleosome is a histone octamer containing two molecules each of H2A, H2B, H3 and H4 assembled in one H3-H4 heterotetramer and two H2A-H2B heterodimers. The octamer wraps approximately 147 bp of DNA. Heterodimer H2BC11 and H2AZ1 interacts with VPS72 (via N-terminal domain). Post-translationally, monoubiquitination at Lys-35 (H2BK34Ub) by the MSL1/MSL2 dimer is required for histone H3 'Lys-4' (H3K4me) and 'Lys-79' (H3K79me) methylation and transcription activation at specific gene loci, such as HOXA9 and MEIS1 loci. Similarly, monoubiquitination at Lys-121 (H2BK120Ub) by the RNF20/40 complex gives a specific tag for epigenetic transcriptional activation and is also prerequisite for histone H3 'Lys-4' and 'Lys-79' methylation. It also functions cooperatively with the FACT dimer to stimulate elongation by RNA polymerase II. H2BK120Ub also acts as a regulator of mRNA splicing: deubiquitination by USP49 is required for efficient cotranscriptional splicing of a large set of exons. Phosphorylation at Ser-37 (H2BS36ph) by AMPK in response to stress promotes transcription. Phosphorylated on Ser-15 (H2BS14ph) by STK4/MST1 during apoptosis; which facilitates apoptotic chromatin condensation. Also phosphorylated on Ser-15 in response to DNA double strand breaks (DSBs), and in correlation with somatic hypermutation and immunoglobulin class-switch recombination. In terms of processing, glcNAcylation at Ser-113 promotes monoubiquitination of Lys-121. It fluctuates in response to extracellular glucose, and associates with transcribed genes. Post-translationally, ADP-ribosylated by PARP1 or PARP2 on Ser-7 (H2BS6ADPr) in response to DNA damage. H2BS6ADPr promotes recruitment of CHD1L. Mono-ADP-ribosylated on Glu-3 (H2BE2ADPr) by PARP3 in response to single-strand breaks. Poly ADP-ribosylation on Glu-36 (H2BE35ADPr) by PARP1 regulates adipogenesis: it inhibits phosphorylation at Ser-37 (H2BS36ph), thereby blocking expression of pro-adipogenetic genes. Crotonylation (Kcr) is specifically present in male germ cells and marks testis-specific genes in post-meiotic cells, including X-linked genes that escape sex chromosome inactivation in haploid cells. Crotonylation marks active promoters and enhancers and confers resistance to transcriptional repressors. It is also associated with post-meiotically activated genes on autosomes. In terms of processing, lactylated in macrophages by EP300/P300 by using lactoyl-CoA directly derived from endogenous or exogenous lactate, leading to stimulates gene transcription.

The protein localises to the nucleus. It localises to the chromosome. Functionally, core component of nucleosome. Nucleosomes wrap and compact DNA into chromatin, limiting DNA accessibility to the cellular machineries which require DNA as a template. Histones thereby play a central role in transcription regulation, DNA repair, DNA replication and chromosomal stability. DNA accessibility is regulated via a complex set of post-translational modifications of histones, also called histone code, and nucleosome remodeling. In terms of biological role, has broad antibacterial activity. May contribute to the formation of the functional antimicrobial barrier of the colonic epithelium, and to the bactericidal activity of amniotic fluid. The chain is Histone H2B type 1-J from Homo sapiens (Human).